A 397-amino-acid polypeptide reads, in one-letter code: Acetate kinase 2 (397 aa).

Residue Asn-10 participates in Mg(2+) binding. Lys-17 is a binding site for ATP. Arg-90 provides a ligand contact to substrate. Asp-147 serves as the catalytic Proton donor/acceptor. ATP contacts are provided by residues 207–211, 281–283, and 329–333; these read HLGNG, DAR, and GIGEN. Glu-385 serves as a coordination point for Mg(2+).

This sequence belongs to the acetokinase family. In terms of assembly, homodimer. Mg(2+) is required as a cofactor. It depends on Mn(2+) as a cofactor.

It is found in the cytoplasm. It catalyses the reaction acetate + ATP = acetyl phosphate + ADP. It participates in metabolic intermediate biosynthesis; acetyl-CoA biosynthesis; acetyl-CoA from acetate: step 1/2. Catalyzes the formation of acetyl phosphate from acetate and ATP. Can also catalyze the reverse reaction. The polypeptide is Acetate kinase 2 (Vibrio vulnificus (strain CMCP6)).